A 79-amino-acid chain; its full sequence is MTHSVDAILDATGLNCPEPVMMLHNKVRDLAPGGLLKVIATDPSTRRDIPKFCVFLGHELVEQQEEAGTYLYWIRKKAD.

Residue cysteine 16 is the Cysteine persulfide intermediate of the active site.

It belongs to the sulfur carrier protein TusA family.

It localises to the cytoplasm. Functionally, sulfur carrier protein which probably makes part of a sulfur-relay system. This Pseudomonas aeruginosa (strain LESB58) protein is Sulfur carrier protein TusA.